The following is a 699-amino-acid chain: Elongation factor G (699 aa).

The 276-residue stretch at 8–283 folds into the tr-type G domain; sequence EHIRNIGICA…AVVDFLPSPI (276 aa). Residues 17–24, 81–85, and 135–138 contribute to the GTP site; these read AHIDAGKT, DTPGH, and NKMD.

Belongs to the TRAFAC class translation factor GTPase superfamily. Classic translation factor GTPase family. EF-G/EF-2 subfamily.

It is found in the cytoplasm. In terms of biological role, catalyzes the GTP-dependent ribosomal translocation step during translation elongation. During this step, the ribosome changes from the pre-translocational (PRE) to the post-translocational (POST) state as the newly formed A-site-bound peptidyl-tRNA and P-site-bound deacylated tRNA move to the P and E sites, respectively. Catalyzes the coordinated movement of the two tRNA molecules, the mRNA and conformational changes in the ribosome. This chain is Elongation factor G, found in Rickettsia africae (strain ESF-5).